The chain runs to 255 residues: Urease accessory protein UreD 1 (255 aa).

It belongs to the UreD family. UreD, UreF and UreG form a complex that acts as a GTP-hydrolysis-dependent molecular chaperone, activating the urease apoprotein by helping to assemble the nickel containing metallocenter of UreC. The UreE protein probably delivers the nickel.

Its subcellular location is the cytoplasm. Required for maturation of urease via the functional incorporation of the urease nickel metallocenter. This Streptomyces griseus subsp. griseus (strain JCM 4626 / CBS 651.72 / NBRC 13350 / KCC S-0626 / ISP 5235) protein is Urease accessory protein UreD 1.